Reading from the N-terminus, the 174-residue chain is MSKFVKLHLVRTLNKYKELQKIRVKDVMISGDVIITTPEKTIKEIFDEMIKHNISGMPVVDDRGVMIGFITLREIRKYMTSHPYLNVGEVMLKNPPYTTADEDIITAFEKMIESNKKLDQLPVINTKYPEKILGKLEGIIFMEDIIKLLYENIIKELKTLVSFYNHNTEIKIKY.

CBS domains are found at residues 28-87 and 91-156; these read MISG…YLNV and MLKN…IIKE.

In terms of processing, methylated at an undetermined residue between Ser-2 and Asp-26.

This chain is Methylated protein MJ0556, found in Methanocaldococcus jannaschii (strain ATCC 43067 / DSM 2661 / JAL-1 / JCM 10045 / NBRC 100440) (Methanococcus jannaschii).